Reading from the N-terminus, the 585-residue chain is Aspartate--tRNA ligase (585 aa).

E173 lines the L-aspartate pocket. Residues 197–200 (QTLK) are aspartate. R219 provides a ligand contact to L-aspartate. Residues 219–221 (RDE) and Q228 each bind ATP. H446 serves as a coordination point for L-aspartate. An ATP-binding site is contributed by E480. Position 487 (R487) interacts with L-aspartate. Residue 532-535 (GLDR) participates in ATP binding.

This sequence belongs to the class-II aminoacyl-tRNA synthetase family. Type 1 subfamily. As to quaternary structure, homodimer.

The protein resides in the cytoplasm. It carries out the reaction tRNA(Asp) + L-aspartate + ATP = L-aspartyl-tRNA(Asp) + AMP + diphosphate. In terms of biological role, catalyzes the attachment of L-aspartate to tRNA(Asp) in a two-step reaction: L-aspartate is first activated by ATP to form Asp-AMP and then transferred to the acceptor end of tRNA(Asp). The sequence is that of Aspartate--tRNA ligase from Parabacteroides distasonis (strain ATCC 8503 / DSM 20701 / CIP 104284 / JCM 5825 / NCTC 11152).